A 93-amino-acid chain; its full sequence is MGNVFSGWHLLVILLVIVLLFGTSRLPKLSKSVVEALKIFRRSFNEASDITRSQDGHPDSQGNFAESASSVPFVKSEKQSEKRASVTEAKKSK.

The chain crosses the membrane as a helical span at residues 1-21; it reads MGNVFSGWHLLVILLVIVLLF. Residues 49-93 form a disordered region; that stretch reads DITRSQDGHPDSQGNFAESASSVPFVKSEKQSEKRASVTEAKKSK. The segment covering 60–70 has biased composition (polar residues); sequence SQGNFAESASS. Basic and acidic residues predominate over residues 75–93; it reads KSEKQSEKRASVTEAKKSK.

This sequence belongs to the TatA/E family. The Tat system comprises two distinct complexes: a TatABC complex, containing multiple copies of TatA, TatB and TatC subunits, and a separate TatA complex, containing only TatA subunits. Substrates initially bind to the TatABC complex, which probably triggers association of the separate TatA complex to form the active translocon.

It localises to the cell membrane. Functionally, part of the twin-arginine translocation (Tat) system that transports large folded proteins containing a characteristic twin-arginine motif in their signal peptide across membranes. TatA could form the protein-conducting channel of the Tat system. This Tropheryma whipplei (strain TW08/27) (Whipple's bacillus) protein is Sec-independent protein translocase protein TatA.